The following is a 490-amino-acid chain: Probable cytosol aminopeptidase (490 aa).

Residues Lys260 and Asp265 each contribute to the Mn(2+) site. Lys272 is an active-site residue. Residues Asp284, Asp343, and Glu345 each contribute to the Mn(2+) site. The active site involves Arg347.

The protein belongs to the peptidase M17 family. It depends on Mn(2+) as a cofactor.

It localises to the cytoplasm. It carries out the reaction Release of an N-terminal amino acid, Xaa-|-Yaa-, in which Xaa is preferably Leu, but may be other amino acids including Pro although not Arg or Lys, and Yaa may be Pro. Amino acid amides and methyl esters are also readily hydrolyzed, but rates on arylamides are exceedingly low.. It catalyses the reaction Release of an N-terminal amino acid, preferentially leucine, but not glutamic or aspartic acids.. Presumably involved in the processing and regular turnover of intracellular proteins. Catalyzes the removal of unsubstituted N-terminal amino acids from various peptides. This is Probable cytosol aminopeptidase from Gloeothece citriformis (strain PCC 7424) (Cyanothece sp. (strain PCC 7424)).